A 188-amino-acid polypeptide reads, in one-letter code: Probable DNA-directed RNA polymerase subunit delta (188 aa).

Positions 14 to 83 constitute an HTH HARE-type domain; the sequence is LSMIEVARAI…GENKWGLRSW (70 aa). The interval 119 to 188 is disordered; the sequence is EDAIDYSADD…EDEEDEEEEE (70 aa).

This sequence belongs to the RpoE family. RNAP is composed of a core of 2 alpha, a beta and a beta' subunits. The core is associated with a delta subunit and one of several sigma factors.

Functionally, participates in both the initiation and recycling phases of transcription. In the presence of the delta subunit, RNAP displays an increased specificity of transcription, a decreased affinity for nucleic acids, and an increased efficiency of RNA synthesis because of enhanced recycling. The sequence is that of Probable DNA-directed RNA polymerase subunit delta from Streptococcus equi subsp. equi (strain 4047).